The chain runs to 3146 residues: Bassianolide nonribosomal cyclodepsipeptide synthetase (3146 aa).

The segment covering 1-12 has biased composition (polar residues); sequence MEPPNNANTGQL. Residues 1-23 are disordered; sequence MEPPNNANTGQLGPTLPNGTVDL. A condensation 1 region spans residues 69-454; sequence HVVYEIPEDV…INKLQSTDGS (386 aa). Residues 495 to 887 are adenylation 1; sequence GDTPNKPAVC…GRMDSQVKIR (393 aa). The region spanning 1015 to 1091 is the Carrier 1 domain; it reads PDASAGVTKL…SLQAAIGGSS (77 aa). O-(pantetheine 4'-phosphoryl)serine is present on Ser-1052. The tract at residues 1109-1538 is condensation 2; the sequence is SYSQGRLWFL…QTLISVVPLT (430 aa). Residues 1567–1973 are adenylation 2; that stretch reads FRTQVASYPD…GRMDFQFKIR (407 aa). An S-adenosyl-L-methionine-dependent N-methyltransferase (MT) region spans residues 2041–2181; it reads TYTELDTVSS…FPTRDYLERV (141 aa). Carrier domains lie at 2514–2588 and 2614–2688; these read FPLS…RQQL and APTT…EVSQ. Ser-2548 and Ser-2648 each carry O-(pantetheine 4'-phosphoryl)serine. Residues 2734-3138 form a condensation 3 region; it reads QDVYLATHLQ…THLMEQVCNT (405 aa).

Belongs to the NRP synthetase family.

It carries out the reaction 4 (R)-2-hydroxy-3-methylbutanoate + 4 L-leucine + 4 S-adenosyl-L-methionine + 8 ATP = bassianolide + 8 AMP + 4 S-adenosyl-L-homocysteine + 8 diphosphate + 8 H(+). Its function is as follows. Bassianolide nonribosomal synthetase that mediates the biosynthesis of bassianolide (BSL), a non-ribosomal cyclodepsipeptide that shows insecticidal and cancer cell antiproliferative activity. BSLS first catalyzes the iterative synthesis of an enzyme-bound dipeptidol monomer intermediate from D-2-hydroxyisovalerate and L-leucine before performing the condensation and cyclization of 4 dipeptidol monomers to yield the cyclic tetrameric ester bassianolide. The N-methyltransferase MT domain is responsible for the methylation of the leucine residues of bassianolide. BSLS is flexible with both the amino acid and hydroxyl acid precursors, and produces bassianolide as the major product (containing N-methyl-L-Leu), together with small amounts of beauvericin and its analogs beauvericins A-C (containing N-methyl-L-Phe). This chain is Bassianolide nonribosomal cyclodepsipeptide synthetase, found in Beauveria bassiana (White muscardine disease fungus).